The sequence spans 493 residues: Voltage-gated potassium channel regulatory subunit KCNF1 (493 aa).

The Cytoplasmic segment spans residues 1-183 (MDASAEQSLP…KPESSCPARV (183 aa)). The chain crosses the membrane as a helical span at residues 184–204 (VAVLSFLLILVSSVVMCMGTI). Residues 224-244 (NVETACIGWFTLEYLLRLFSS) traverse the membrane as a helical segment. The Cytoplasmic segment spans residues 245 to 249 (PNKLH). A helical transmembrane segment spans residues 250–270 (FALSFMNIVDVLAILPFYVSL). The chain crosses the membrane as a helical; Voltage-sensor span at residues 290-310 (QALRIMRIARIFKLARHSSGL). Topologically, residues 311 to 324 (QTLTYALKRSFKEL) are cytoplasmic. Residues 325–345 (GLLLMYLAVGIFVFSALGYTM) form a helical membrane-spanning segment. Residues 358–378 (PQSFWWAIITMTTVGYGDIYP) constitute an intramembrane region (pore-forming). Residues 370–375 (TVGYGD) carry the Selectivity filter motif. The helical transmembrane segment at 386–406 (NAAISFLCGVIAIALPIHPII) threads the bilayer. The Cytoplasmic segment spans residues 407–493 (NNFVRYYNKQ…HHRTRLQSCK (87 aa)). The interval 434–468 (SSSAEGKPGGSRSDLDTLPPEPAAREGPSWGSRLK) is disordered.

The protein belongs to the potassium channel family. F (TC 1.A.1.2) subfamily. Kv5.1/KCNF1 sub-subfamily. In terms of assembly, heterotetramer with KCNB1 or KCNB2.

It is found in the cell membrane. Regulatory alpha-subunit of the voltage-gated potassium (Kv) channel which, when coassembled with KCNB1 or KCNB2, can modulate their expression and their gating kinetics by acting on deactivation upon repolarization and inactivation during maintained depolarization. Accelerates inactivation but has relatively little effect on deactivation. Coexpression with KCNB1 or KCNB2 markedly slows inactivation. Each modulatory subunit has its own specific properties of regulation, and can lead to extensive inhibitions, to large changes in kinetics, and/or to large shifts in the voltage dependencies of the inactivation process. The gating kinetics depends on the nature and stoichiometry of the associated regulatory sunbunit. Fails to produce a potassium current when expressed alone. This Mus musculus (Mouse) protein is Voltage-gated potassium channel regulatory subunit KCNF1.